The sequence spans 221 residues: Endo-1,4-beta-xylanase A (221 aa).

The N-terminal stretch at 1-16 is a signal peptide; the sequence is MKFFATIAALVVGAVA. Residues 29–221 enclose the GH11 domain; that stretch reads PMLIERAGPG…GTGSASVTVS (193 aa). Catalysis depends on Glu114, which acts as the Nucleophile. Catalysis depends on Glu208, which acts as the Proton donor.

This sequence belongs to the glycosyl hydrolase 11 (cellulase G) family.

The protein localises to the secreted. The catalysed reaction is Endohydrolysis of (1-&gt;4)-beta-D-xylosidic linkages in xylans.. It functions in the pathway glycan degradation; xylan degradation. In terms of biological role, endo-1,4-beta-xylanase involved in the hydrolysis of xylan, a major structural heterogeneous polysaccharide found in plant biomass representing the second most abundant polysaccharide in the biosphere, after cellulose. The chain is Endo-1,4-beta-xylanase A (xynA) from Aureobasidium pullulans (Black yeast).